A 424-amino-acid polypeptide reads, in one-letter code: MAKQIQAIRGMNDILPTQSPLWQKVEAVLRSSVSAFGYSEIRTPIVESTDLFKRSIGEVTDIVEKEMYTFEDRNSDSLTLRPEGTASTVRAGNEHGLLYNQEQRLWYMGPMFRHERPQKGRYRQFHQFGVEVYGIGSADIDAEVLMLSARLWDLLGIKEHVALELNTLGDPAERAAYRDALIAFLEQHKDKLDEDSQRRMYSNPLRVLDSKDPQVQAILGDAPALMDYLGEDSKTHFSTLCELLDAVGIQYTINPRLVRGLDYYNRTVFEWVTTSLGSQGTVLAGGRYDGLVGQLGGKDTPAVGFAMGLERIVLLLETLELTSDIAPEVDVYVTAMGENCVVEAIKVAQELRQQLPTLKVMSHCGGGNFKKQMKRADKSGAQFALIIGENEIANNQVAIKPLRTNNEQQLVTRSELVAKIAELI.

This sequence belongs to the class-II aminoacyl-tRNA synthetase family. Homodimer.

It localises to the cytoplasm. The catalysed reaction is tRNA(His) + L-histidine + ATP = L-histidyl-tRNA(His) + AMP + diphosphate + H(+). The polypeptide is Histidine--tRNA ligase (Shewanella frigidimarina (strain NCIMB 400)).